Consider the following 570-residue polypeptide: 2-succinyl-5-enolpyruvyl-6-hydroxy-3-cyclohexene-1-carboxylate synthase (570 aa).

It belongs to the TPP enzyme family. MenD subfamily. As to quaternary structure, homodimer. Requires Mg(2+) as cofactor. Mn(2+) serves as cofactor. The cofactor is thiamine diphosphate.

The enzyme catalyses isochorismate + 2-oxoglutarate + H(+) = 5-enolpyruvoyl-6-hydroxy-2-succinyl-cyclohex-3-ene-1-carboxylate + CO2. Its pathway is quinol/quinone metabolism; 1,4-dihydroxy-2-naphthoate biosynthesis; 1,4-dihydroxy-2-naphthoate from chorismate: step 2/7. The protein operates within quinol/quinone metabolism; menaquinone biosynthesis. Functionally, catalyzes the thiamine diphosphate-dependent decarboxylation of 2-oxoglutarate and the subsequent addition of the resulting succinic semialdehyde-thiamine pyrophosphate anion to isochorismate to yield 2-succinyl-5-enolpyruvyl-6-hydroxy-3-cyclohexene-1-carboxylate (SEPHCHC). This Vibrio cholerae serotype O1 (strain ATCC 39541 / Classical Ogawa 395 / O395) protein is 2-succinyl-5-enolpyruvyl-6-hydroxy-3-cyclohexene-1-carboxylate synthase.